Reading from the N-terminus, the 406-residue chain is Olfactomedin-like protein 3 (406 aa).

The N-terminal stretch at 1 to 21 is a signal peptide; that stretch reads MGPHTQLLILLLLSWLGPLQG. Residues 22–101 adopt a coiled-coil conformation; the sequence is QQHHLVEYME…REVDYLETQN (80 aa). One can recognise an Olfactomedin-like domain in the interval 134–401; it reads DCGYTISQVR…QIVYKLEMRK (268 aa). Cysteines 135 and 328 form a disulfide. An N-linked (GlcNAc...) asparagine glycan is attached at Asn248.

It belongs to the OLFML3 family.

The protein localises to the secreted. Its function is as follows. Secreted scaffold protein that plays an essential role in dorsoventral patterning during early development. Stabilizes axial formation by restricting chordin (CHRD) activity on the dorsal side. Acts by facilitating the association between the tolloid proteases and their substrate chordin (CHRD), leading to enhance chordin (CHRD) degradation. May have matrix-related function involved in placental and embryonic development, or play a similar role in other physiological processes. The polypeptide is Olfactomedin-like protein 3 (OLFML3) (Bos taurus (Bovine)).